We begin with the raw amino-acid sequence, 136 residues long: Acyl carrier protein 2, chloroplastic (136 aa).

A chloroplast-targeting transit peptide spans 1–51 (MASIAASASISLQARPRQLAIAASQVKSFSNGRRSSLSFNLRQLPTRLTVS). The 76-residue stretch at 56 to 131 (PETVDKVCAV…QAAALIEELL (76 aa)) folds into the Carrier domain. At S91 the chain carries O-(pantetheine 4'-phosphoryl)serine.

Belongs to the acyl carrier protein (ACP) family. 4'-phosphopantetheine is transferred from CoA to a specific serine of apo-ACP by acpS. This modification is essential for activity because fatty acids are bound in thioester linkage to the sulfhydryl of the prosthetic group.

Its subcellular location is the plastid. It is found in the chloroplast. In terms of biological role, carrier of the growing fatty acid chain in fatty acid biosynthesis. The protein is Acyl carrier protein 2, chloroplastic (ACP2) of Arabidopsis thaliana (Mouse-ear cress).